A 400-amino-acid chain; its full sequence is 8-amino-7-oxononanoate synthase (400 aa).

Arg21 contributes to the substrate binding site. 112–113 serves as a coordination point for pyridoxal 5'-phosphate; sequence GY. A substrate-binding site is contributed by His137. Pyridoxal 5'-phosphate contacts are provided by Ser183, His211, and Thr239. Lys242 carries the post-translational modification N6-(pyridoxal phosphate)lysine. Thr358 is a binding site for substrate.

It belongs to the class-II pyridoxal-phosphate-dependent aminotransferase family. BioF subfamily. In terms of assembly, homodimer. Pyridoxal 5'-phosphate serves as cofactor.

The catalysed reaction is 6-carboxyhexanoyl-[ACP] + L-alanine + H(+) = (8S)-8-amino-7-oxononanoate + holo-[ACP] + CO2. It functions in the pathway cofactor biosynthesis; biotin biosynthesis. Catalyzes the decarboxylative condensation of pimeloyl-[acyl-carrier protein] and L-alanine to produce 8-amino-7-oxononanoate (AON), [acyl-carrier protein], and carbon dioxide. The sequence is that of 8-amino-7-oxononanoate synthase from Burkholderia lata (strain ATCC 17760 / DSM 23089 / LMG 22485 / NCIMB 9086 / R18194 / 383).